The primary structure comprises 193 residues: Thioredoxin M4, chloroplastic (193 aa).

The N-terminal 82 residues, 1 to 82, are a transit peptide targeting the chloroplast; the sequence is MASLLDSVTV…RIACEAQDTT (82 aa). Residues 83 to 192 form the Thioredoxin domain; the sequence is AAAVEVPNLS…LEKTIERFLV (110 aa). Active-site nucleophile residues include Cys-116 and Cys-119. Cysteines 116 and 119 form a disulfide.

Belongs to the thioredoxin family. Plant M-type subfamily.

The protein resides in the plastid. Its subcellular location is the chloroplast stroma. Its function is as follows. Thiol-disulfide oxidoreductase involved in the redox regulation of enzyme of the oxidative pentose phosphate pathway. Under reducing conditions, inhibits the glucose-6-phosphate dehydrogenase. In Arabidopsis thaliana (Mouse-ear cress), this protein is Thioredoxin M4, chloroplastic.